A 199-amino-acid polypeptide reads, in one-letter code: Ribonuclease HII (199 aa).

In terms of domain architecture, RNase H type-2 spans 11-199 (SRVAGVDEVG…RRSFLRRLLG (189 aa)). Aspartate 17, glutamate 18, and aspartate 113 together coordinate a divalent metal cation.

Belongs to the RNase HII family. Requires Mn(2+) as cofactor. Mg(2+) serves as cofactor.

The protein localises to the cytoplasm. The catalysed reaction is Endonucleolytic cleavage to 5'-phosphomonoester.. Endonuclease that specifically degrades the RNA of RNA-DNA hybrids. This chain is Ribonuclease HII, found in Synechococcus sp. (strain CC9902).